Here is a 687-residue protein sequence, read N- to C-terminus: Glycine--tRNA ligase beta subunit (687 aa).

Belongs to the class-II aminoacyl-tRNA synthetase family. As to quaternary structure, tetramer of two alpha and two beta subunits.

Its subcellular location is the cytoplasm. The catalysed reaction is tRNA(Gly) + glycine + ATP = glycyl-tRNA(Gly) + AMP + diphosphate. The protein is Glycine--tRNA ligase beta subunit of Neisseria meningitidis serogroup A / serotype 4A (strain DSM 15465 / Z2491).